The chain runs to 455 residues: Glutamyl-tRNA(Gln) amidotransferase subunit A (455 aa).

Catalysis depends on charge relay system residues Lys-74 and Ser-149. The active-site Acyl-ester intermediate is the Ser-173.

This sequence belongs to the amidase family. GatA subfamily. Heterotrimer of A, B and C subunits.

It catalyses the reaction L-glutamyl-tRNA(Gln) + L-glutamine + ATP + H2O = L-glutaminyl-tRNA(Gln) + L-glutamate + ADP + phosphate + H(+). Functionally, allows the formation of correctly charged Gln-tRNA(Gln) through the transamidation of misacylated Glu-tRNA(Gln) in organisms which lack glutaminyl-tRNA synthetase. The reaction takes place in the presence of glutamine and ATP through an activated gamma-phospho-Glu-tRNA(Gln). In Methanosphaera stadtmanae (strain ATCC 43021 / DSM 3091 / JCM 11832 / MCB-3), this protein is Glutamyl-tRNA(Gln) amidotransferase subunit A.